The following is a 423-amino-acid chain: Cyclin-B2-1 (423 aa).

Residues 1-61 (MDRASENRRL…EKSGKEEQKP (61 aa)) are disordered. Positions 49 to 60 (PMLEKSGKEEQK) are enriched in basic and acidic residues.

It belongs to the cyclin family. Cyclin AB subfamily. Interacts with CDKB2-1. Expressed in the intercalary meristem and the elongation zone of internodes. Expressed in adventitious roots at all nodes under submergence conditions.

Functionally, involved in the control of the cell cycle at the G2/M (mitosis) transition. May activate CDKB2-1 kinase. The polypeptide is Cyclin-B2-1 (CYCB2-1) (Oryza sativa subsp. indica (Rice)).